The chain runs to 297 residues: Guanylate kinase (297 aa).

Positions 4 to 183 (GKMIIISGPS…AVAKITDVLH (180 aa)) constitute a Guanylate kinase-like domain. 11–18 (GPSGVGKG) is a binding site for ATP. The segment at 204-297 (EQIVKEKYMY…EQKHYNNDEF (94 aa)) is unknown.

This sequence belongs to the guanylate kinase family.

The protein localises to the cytoplasm. It catalyses the reaction GMP + ATP = GDP + ADP. Its function is as follows. Essential for recycling GMP and indirectly, cGMP. In Mycoplasma capricolum subsp. capricolum (strain California kid / ATCC 27343 / NCTC 10154), this protein is Guanylate kinase (gmk).